We begin with the raw amino-acid sequence, 126 residues long: Ribonuclease P protein component (126 aa).

It belongs to the RnpA family. As to quaternary structure, consists of a catalytic RNA component (M1 or rnpB) and a protein subunit.

The enzyme catalyses Endonucleolytic cleavage of RNA, removing 5'-extranucleotides from tRNA precursor.. RNaseP catalyzes the removal of the 5'-leader sequence from pre-tRNA to produce the mature 5'-terminus. It can also cleave other RNA substrates such as 4.5S RNA. The protein component plays an auxiliary but essential role in vivo by binding to the 5'-leader sequence and broadening the substrate specificity of the ribozyme. This Brevibacillus brevis (strain 47 / JCM 6285 / NBRC 100599) protein is Ribonuclease P protein component.